Here is a 101-residue protein sequence, read N- to C-terminus: Protamine-3 (101 aa).

Positions 1–101 are disordered; sequence MGSRCAKLST…PSPEPKQTHS (101 aa). A compositionally biased stretch (acidic residues) spans 45-67; sequence EGEEEEEDEEEEEEEEEEEEEEQ. Ser-93 is subject to Phosphoserine.

The protein belongs to the protamine P3 family. As to expression, testis.

It localises to the nucleus. The protein localises to the chromosome. Protamines substitute for histones in the chromatin of sperm during the haploid phase of spermatogenesis. They compact sperm DNA into a highly condensed, stable and inactive complex. The sequence is that of Protamine-3 (Prm3) from Mus musculus (Mouse).